The primary structure comprises 300 residues: MKFLSFKYNDKTSYGVKVKREDAVWDLTQVFADFAEGDFHPKTLLAGLQQNHTLDFQEQVRKAVVAAEDSGKAEDYKISFNDIEFLPPVTPPNNVIAFGRNYKDHANELNHEVEKLYVFTKAASSLTGDNATIPNHKDITDQLDYEGELGIVIGKSGEKIPKALALDYVYGYTIINDITDRKAQSEQDQAFLSKSLTGGCPMGPYIVTKDELPLPENVNIVTKVNNEIRQDGNTGEMILKIDELIEEISKYVALHPGDIIATGTPAGVGAGMQPPKFLQPGDEVKVTIDNIGTLTTYIAK.

A divalent metal cation contacts are provided by Glu146, Glu148, and Asp177.

It belongs to the FAH family.

This is an uncharacterized protein from Staphylococcus aureus (strain MW2).